Here is a 251-residue protein sequence, read N- to C-terminus: Regulator of G-protein signaling 9-binding protein C (251 aa).

At 1–230 (MPLQNVKVAD…NSKGCCSDGQ (230 aa)) the chain is on the cytoplasmic side. Coiled coils occupy residues 53 to 94 (LRDE…ELER) and 158 to 187 (ANKASLEYQEIEEEILKVDNMITDMEMKVN). Residues 231–250 (LIVSLLLCGTALVAITLYSI) traverse the membrane as a helical; Anchor for type IV membrane protein segment. L251 is a topological domain (extracellular).

It belongs to the RGS7BP/RGS9BP family.

The protein localises to the membrane. Functionally, regulator of G protein-coupled receptor (GPCR) signaling. Probably acts by regulating the activity of some 'R7' family protein (RGS6, RGS7, RGS9 and/or RGS11). This is Regulator of G-protein signaling 9-binding protein C (rgs9bp-c) from Xenopus laevis (African clawed frog).